The following is a 111-amino-acid chain: Fluoride-specific ion channel FluC 3 (111 aa).

The next 3 membrane-spanning stretches (helical) occupy residues 26–46 (IPAGTLTVNLLGSIVLALLTF), 53–73 (VVYLVNIGMLGSFTTFSTFAY), and 91–111 (IFLNVMLCLLGVSIAYLALML). Gly-63 and Thr-66 together coordinate Na(+).

It belongs to the fluoride channel Fluc/FEX (TC 1.A.43) family.

The protein resides in the cell membrane. The catalysed reaction is fluoride(in) = fluoride(out). Na(+) is not transported, but it plays an essential structural role and its presence is essential for fluoride channel function. Fluoride-specific ion channel. Important for reducing fluoride concentration in the cell, thus reducing its toxicity. The sequence is that of Fluoride-specific ion channel FluC 3 from Methanosarcina acetivorans (strain ATCC 35395 / DSM 2834 / JCM 12185 / C2A).